The sequence spans 443 residues: Serine/threonine-protein phosphatase 2A 55 kDa regulatory subunit B beta isoform (443 aa).

4 WD repeats span residues 22–61 (TEAD…KNQV), 87–128 (EIEE…KRPE), 171–209 (AHTY…QSFN), and 220–260 (ELTE…LCDR). Residue serine 275 is modified to Phosphoserine. WD repeat units lie at residues 279–317 (EIIS…RPIE), 334–375 (ENDC…DVTL), and 410–442 (DFSK…QDKV). Position 295 is a phosphotyrosine (tyrosine 295). Residue threonine 298 is modified to Phosphothreonine.

The protein belongs to the phosphatase 2A regulatory subunit B family. PP2A consists of a common heterodimeric core enzyme, composed of a 36 kDa catalytic subunit (subunit C) and a 65 kDa constant regulatory subunit (PR65 or subunit A), that associates with a variety of regulatory subunits. Proteins that associate with the core dimer include three families of regulatory subunits B (the R2/B/PR55/B55, R3/B''/PR72/PR130/PR59 and R5/B'/B56 families), the 48 kDa variable regulatory subunit, viral proteins, and cell signaling molecules. Interacts with TOMM22. Interacts with IER5 (via N- and C-terminal regions).

Its subcellular location is the cytoplasm. It is found in the cytoskeleton. The protein resides in the membrane. Its function is as follows. The B regulatory subunit might modulate substrate selectivity and catalytic activity, and might also direct the localization of the catalytic enzyme to a particular subcellular compartment. This is Serine/threonine-protein phosphatase 2A 55 kDa regulatory subunit B beta isoform (PPP2R2B) from Bos taurus (Bovine).